We begin with the raw amino-acid sequence, 314 residues long: Bifunctional pinoresinol-lariciresinol reductase (314 aa).

Residues 10–16 (GGTGYIG), Arg35, and Lys44 contribute to the NADP(+) site. Residue Lys138 is the Proton acceptor of the active site. Residue Arg142 coordinates NADP(+). His270 contributes to the substrate binding site.

Belongs to the NmrA-type oxidoreductase family. Isoflavone reductase subfamily. Dimer.

The enzyme catalyses (+)-lariciresinol + NADP(+) = (+)-pinoresinol + NADPH + H(+). The catalysed reaction is (+)-secoisolariciresinol + NADP(+) = (-)-lariciresinol + NADPH + H(+). In terms of biological role, reductase involved in the lignan justicidin B biosynthesis. Catalyzes the enantioselective conversion of (+)-pinoresinol into (+)-lariciresinol and of (-)-lariciresinol into (+)-secoisolariciresinol. Low activity with the other enantiomers. Abstracts the 4R-hydride from the NADPH cofactor during catalysis. The polypeptide is Bifunctional pinoresinol-lariciresinol reductase (PLR_Lp1) (Linum perenne (Perennial flax)).